A 238-amino-acid chain; its full sequence is Ribonuclease PH (238 aa).

Phosphate-binding positions include Arg86 and 124–126; that span reads GTR.

The protein belongs to the RNase PH family. In terms of assembly, homohexameric ring arranged as a trimer of dimers.

The catalysed reaction is tRNA(n+1) + phosphate = tRNA(n) + a ribonucleoside 5'-diphosphate. Its function is as follows. Phosphorolytic 3'-5' exoribonuclease that plays an important role in tRNA 3'-end maturation. Removes nucleotide residues following the 3'-CCA terminus of tRNAs; can also add nucleotides to the ends of RNA molecules by using nucleoside diphosphates as substrates, but this may not be physiologically important. Probably plays a role in initiation of 16S rRNA degradation (leading to ribosome degradation) during starvation. The sequence is that of Ribonuclease PH from Haemophilus ducreyi (strain 35000HP / ATCC 700724).